A 229-amino-acid polypeptide reads, in one-letter code: Ribonuclease 3 (229 aa).

One can recognise an RNase III domain in the interval 4-133 (WEELQESVGF…FIGALYLDNG (130 aa)). Residue Glu-46 coordinates Mg(2+). Asp-50 is a catalytic residue. Mg(2+) is bound by residues Asp-119 and Glu-122. The active site involves Glu-122. The region spanning 159 to 228 (DYKTQLQEIV…AQFAINQLTH (70 aa)) is the DRBM domain.

This sequence belongs to the ribonuclease III family. As to quaternary structure, homodimer. Mg(2+) serves as cofactor.

Its subcellular location is the cytoplasm. It catalyses the reaction Endonucleolytic cleavage to 5'-phosphomonoester.. In terms of biological role, digests double-stranded RNA. Involved in the processing of primary rRNA transcript to yield the immediate precursors to the large and small rRNAs (23S and 16S). Processes some mRNAs, and tRNAs when they are encoded in the rRNA operon. Processes pre-crRNA and tracrRNA of type II CRISPR loci if present in the organism. The sequence is that of Ribonuclease 3 from Listeria monocytogenes serotype 4b (strain CLIP80459).